Reading from the N-terminus, the 688-residue chain is Translation initiation factor IF-2 (688 aa).

The interval 54-95 is disordered; it reads KEKSEKTKEEDDEIETTAKNPIKESTNNKKPNKRDDKNEKVN. Residues 86–95 show a composition bias toward basic and acidic residues; it reads KRDDKNEKVN. The tr-type G domain maps to 187–354; that stretch reads KRSPIITVMG…MILLSSEILE (168 aa). Positions 196-203 are G1; sequence GHVDHGKT. 196–203 lines the GTP pocket; sequence GHVDHGKT. The G2 stretch occupies residues 221-225; that stretch reads GITQH. A G3 region spans residues 242–245; sequence DTPG. Residues 242-246 and 296-299 contribute to the GTP site; these read DTPGH and NKID. The interval 296–299 is G4; sequence NKID. Residues 332-334 form a G5 region; the sequence is SAH.

Belongs to the TRAFAC class translation factor GTPase superfamily. Classic translation factor GTPase family. IF-2 subfamily.

It is found in the cytoplasm. In terms of biological role, one of the essential components for the initiation of protein synthesis. Protects formylmethionyl-tRNA from spontaneous hydrolysis and promotes its binding to the 30S ribosomal subunits. Also involved in the hydrolysis of GTP during the formation of the 70S ribosomal complex. The chain is Translation initiation factor IF-2 from Clostridium botulinum (strain Okra / Type B1).